A 479-amino-acid polypeptide reads, in one-letter code: Anaerobic nitric oxide reductase flavorubredoxin (479 aa).

Residues 30 to 210 (LRGSSYNSYL…PFSRLVTPKI (181 aa)) form a zinc metallo-hydrolase region. 6 residues coordinate Fe cation: His-79, Glu-81, Asp-83, His-147, Asp-166, and His-227. In terms of domain architecture, Flavodoxin-like spans 254–393 (ITIFYDTMSN…LCRQHGRDIA (140 aa)). Residues 260 to 264 (TMSNN) and 342 to 369 (AFGS…EMSL) contribute to the FMN site. One can recognise a Rubredoxin-like domain in the interval 423-474 (GPKMQCSVCQWIYDPALGEPLQDVAPGTPWSDVPDNFLCPECSLGKDVFDVL). Positions 428, 431, 461, and 464 each coordinate Fe cation.

The protein in the N-terminal section; belongs to the zinc metallo-hydrolase group 3 family. As to quaternary structure, homotetramer. Requires Fe cation as cofactor. FMN serves as cofactor.

Its subcellular location is the cytoplasm. It functions in the pathway nitrogen metabolism; nitric oxide reduction. Anaerobic nitric oxide reductase; uses NADH to detoxify nitric oxide (NO), protecting several 4Fe-4S NO-sensitive enzymes. Has at least 2 reductase partners, only one of which (NorW, flavorubredoxin reductase) has been identified. NO probably binds to the di-iron center; electrons enter from the NorW at rubredoxin and are transferred sequentially to the FMN center and the di-iron center. Also able to function as an aerobic oxygen reductase. The polypeptide is Anaerobic nitric oxide reductase flavorubredoxin (Salmonella arizonae (strain ATCC BAA-731 / CDC346-86 / RSK2980)).